The chain runs to 648 residues: MSRRGDRPRTPAQPRKKARVDQPRSARTRRTRVSEAEAGLRSSSFVFRHRTGNLAILAVLVIAAVQLFMLQVPRAAGLRAEAASQLKVTDITPAIRGSIIDRNNDKLAFTIEARALTFQPTRVRKQLDEAWRKAQEAGSSTSDDVPNPDERLNEIAKEIAARLNNTPDAKTVLKKLKSNETFVYLARAVDPAIANAITDKFPEVGSERQDLRQYPGGSLAANIVGGIDWDGHGLLGLEDSLDAVLAGTDGSVTYDRGSDGVVIPGSYRNRHDAVDGSTVQLTIDDDIQYHVQQQVQMAKDASGAKNVSAVVLDAKTGEVLAMSNDNTFDPSQDIGRQADRQMGNPSVSSPFEPGSVNKIVTAAAAIENGLTNPDEVLQVPGSIHMGGVTVRDAWNHGVMPYTTTGVFGKSSNVGTLMLAQRVGPERFYEMLRKFGLGQRTNVGLPGESSGLLPPIDQWSGSSFSNLPIGQGLSMTLLQMAAMYQTVANDGVRVPPRIIKSTIAPDGTVTEEERPEGIRVISPETARTLRSMFRSVVQRDPMGVQQGTGPQAAVEGYQIAGKTGTAQQINPACGCYYDDVYWITFAGIAPADDPRYVIGIMMDAPQRAADGSPGSSAAPLFHEIASWLLQRHNVPLSPDPGPPLTLQAT.

The tract at residues 1–35 is disordered; that stretch reads MSRRGDRPRTPAQPRKKARVDQPRSARTRRTRVSE. Residues 52–72 traverse the membrane as a helical segment; that stretch reads GNLAILAVLVIAAVQLFMLQV. Catalysis depends on S355, which acts as the Acyl-ester intermediate.

The protein belongs to the transpeptidase family. Interacts with Wag31.

It is found in the cell membrane. This chain is Penicillin-binding protein PbpB (pbpB), found in Mycolicibacterium smegmatis (strain ATCC 700084 / mc(2)155) (Mycobacterium smegmatis).